The primary structure comprises 140 residues: Putative esterase MT1895 (140 aa).

The protein belongs to the thioesterase PaaI family.

In Mycobacterium tuberculosis (strain CDC 1551 / Oshkosh), this protein is Putative esterase MT1895.